The sequence spans 239 residues: Orotidine 5'-phosphate decarboxylase (239 aa).

Substrate-binding positions include D15, K37, 64–73, T126, R187, Q196, G216, and R217; that span reads DLKFHDIPNT. K66 (proton donor) is an active-site residue.

This sequence belongs to the OMP decarboxylase family. Type 1 subfamily. Homodimer.

It catalyses the reaction orotidine 5'-phosphate + H(+) = UMP + CO2. It participates in pyrimidine metabolism; UMP biosynthesis via de novo pathway; UMP from orotate: step 2/2. Catalyzes the decarboxylation of orotidine 5'-monophosphate (OMP) to uridine 5'-monophosphate (UMP). The polypeptide is Orotidine 5'-phosphate decarboxylase (Geobacter sulfurreducens (strain ATCC 51573 / DSM 12127 / PCA)).